A 104-amino-acid chain; its full sequence is Ycf49-like protein (104 aa).

The next 3 helical transmembrane spans lie at 6–26 (IPTW…IALV), 41–61 (LAWG…WHFF), and 73–93 (LQAL…WWIY).

The protein belongs to the ycf49 family.

It localises to the cell membrane. This is Ycf49-like protein from Synechocystis sp. (strain ATCC 27184 / PCC 6803 / Kazusa).